Consider the following 254-residue polypeptide: Pimeloyl-[acyl-carrier protein] methyl ester esterase (254 aa).

Residues Trp-20, 80-81 (SL), and 141-145 (FLALQ) each bind substrate. Catalysis depends on Ser-80, which acts as the Nucleophile. Residues Asp-205 and His-233 contribute to the active site. His-233 contacts substrate.

This sequence belongs to the AB hydrolase superfamily. Carboxylesterase BioH family. In terms of assembly, monomer.

The protein localises to the cytoplasm. It carries out the reaction 6-carboxyhexanoyl-[ACP] methyl ester + H2O = 6-carboxyhexanoyl-[ACP] + methanol + H(+). It participates in cofactor biosynthesis; biotin biosynthesis. The physiological role of BioH is to remove the methyl group introduced by BioC when the pimeloyl moiety is complete. It allows to synthesize pimeloyl-ACP via the fatty acid synthetic pathway through the hydrolysis of the ester bonds of pimeloyl-ACP esters. This chain is Pimeloyl-[acyl-carrier protein] methyl ester esterase, found in Methylococcus capsulatus (strain ATCC 33009 / NCIMB 11132 / Bath).